The following is a 225-amino-acid chain: ATP-dependent dethiobiotin synthetase BioD (225 aa).

12 to 17 (GVGKTV) contacts ATP. Position 16 (threonine 16) interacts with Mg(2+). The active site involves lysine 37. Position 41 (threonine 41) interacts with substrate. ATP-binding positions include aspartate 49, 108 to 111 (EGAG), and 197 to 199 (PAG). Residues aspartate 49 and glutamate 108 each contribute to the Mg(2+) site.

It belongs to the dethiobiotin synthetase family. As to quaternary structure, homodimer. The cofactor is Mg(2+).

It localises to the cytoplasm. The catalysed reaction is (7R,8S)-7,8-diammoniononanoate + CO2 + ATP = (4R,5S)-dethiobiotin + ADP + phosphate + 3 H(+). It functions in the pathway cofactor biosynthesis; biotin biosynthesis; biotin from 7,8-diaminononanoate: step 1/2. Functionally, catalyzes a mechanistically unusual reaction, the ATP-dependent insertion of CO2 between the N7 and N8 nitrogen atoms of 7,8-diaminopelargonic acid (DAPA, also called 7,8-diammoniononanoate) to form a ureido ring. This is ATP-dependent dethiobiotin synthetase BioD from Mycolicibacterium smegmatis (strain ATCC 700084 / mc(2)155) (Mycobacterium smegmatis).